We begin with the raw amino-acid sequence, 372 residues long: Glutamate 5-kinase (372 aa).

K14 is an ATP binding site. Substrate contacts are provided by S54, D141, and N153. 173-174 serves as a coordination point for ATP; it reads TD. Residues 280–358 enclose the PUA domain; sequence RGRVIIDAGA…SEIESVLGHL (79 aa).

Belongs to the glutamate 5-kinase family.

It is found in the cytoplasm. The enzyme catalyses L-glutamate + ATP = L-glutamyl 5-phosphate + ADP. The protein operates within amino-acid biosynthesis; L-proline biosynthesis; L-glutamate 5-semialdehyde from L-glutamate: step 1/2. Functionally, catalyzes the transfer of a phosphate group to glutamate to form L-glutamate 5-phosphate. This chain is Glutamate 5-kinase, found in Cupriavidus metallidurans (strain ATCC 43123 / DSM 2839 / NBRC 102507 / CH34) (Ralstonia metallidurans).